Reading from the N-terminus, the 50-residue chain is Sperm protamine P1 (50 aa).

Belongs to the protamine P1 family. Testis.

The protein localises to the nucleus. It localises to the chromosome. Functionally, protamines substitute for histones in the chromatin of sperm during the haploid phase of spermatogenesis. They compact sperm DNA into a highly condensed, stable and inactive complex. This Natalus stramineus (Mexican funnel-eared bat) protein is Sperm protamine P1 (PRM1).